The primary structure comprises 199 residues: Recombination protein RecR (199 aa).

A C4-type zinc finger spans residues 57 to 72 (CQSCRTFTEQSLCPIC). Residues 81–176 (GVICVVETPA…IISRIAHGVP (96 aa)) form the Toprim domain.

This sequence belongs to the RecR family.

May play a role in DNA repair. It seems to be involved in an RecBC-independent recombinational process of DNA repair. It may act with RecF and RecO. The polypeptide is Recombination protein RecR (Shewanella denitrificans (strain OS217 / ATCC BAA-1090 / DSM 15013)).